The primary structure comprises 279 residues: 3-methyl-2-oxobutanoate hydroxymethyltransferase (279 aa).

The Mg(2+) site is built by Asp-43 and Asp-82. 3-methyl-2-oxobutanoate is bound by residues 43–44 (DS), Asp-82, and Lys-112. Position 114 (Glu-114) interacts with Mg(2+). Residue Glu-181 is the Proton acceptor of the active site.

This sequence belongs to the PanB family. As to quaternary structure, homodecamer; pentamer of dimers. The cofactor is Mg(2+).

The protein resides in the cytoplasm. It catalyses the reaction 3-methyl-2-oxobutanoate + (6R)-5,10-methylene-5,6,7,8-tetrahydrofolate + H2O = 2-dehydropantoate + (6S)-5,6,7,8-tetrahydrofolate. It functions in the pathway cofactor biosynthesis; (R)-pantothenate biosynthesis; (R)-pantoate from 3-methyl-2-oxobutanoate: step 1/2. Functionally, catalyzes the reversible reaction in which hydroxymethyl group from 5,10-methylenetetrahydrofolate is transferred onto alpha-ketoisovalerate to form ketopantoate. This chain is 3-methyl-2-oxobutanoate hydroxymethyltransferase, found in Halalkalibacterium halodurans (strain ATCC BAA-125 / DSM 18197 / FERM 7344 / JCM 9153 / C-125) (Bacillus halodurans).